A 982-amino-acid polypeptide reads, in one-letter code: Coatomer subunit beta (982 aa).

4 HEAT repeats span residues 16-53 (SGAP…NGEP), 130-167 (ELVE…RFPE), 241-278 (YDKG…SPTA), and 317-352 (LQDS…NQNS).

Oligomeric complex that consists of at least the alpha, beta, beta', gamma, delta, epsilon and zeta subunits.

It localises to the cytoplasm. It is found in the golgi apparatus membrane. The protein resides in the cytoplasmic vesicle. The protein localises to the COPI-coated vesicle membrane. Functionally, the coatomer is a cytosolic protein complex that binds to dilysine motifs and reversibly associates with Golgi non-clathrin-coated vesicles, which further mediate biosynthetic protein transport from the ER, via the Golgi up to the trans Golgi network. Coatomer complex is required for budding from Golgi membranes, and is essential for the retrograde Golgi-to-ER transport of dilysine-tagged proteins. The protein is Coatomer subunit beta of Trypanosoma brucei brucei.